We begin with the raw amino-acid sequence, 57 residues long: Sec-independent protein translocase protein TatA (57 aa).

The chain crosses the membrane as a helical span at residues 1–21; that stretch reads MGISVWQLLIILLIVVMLFGT. The segment at 37–57 is disordered; sequence GFRKSVSDGETTTQAEASSRS. The span at 44-57 shows a compositional bias: polar residues; the sequence is DGETTTQAEASSRS.

It belongs to the TatA/E family. The Tat system comprises two distinct complexes: a TatABC complex, containing multiple copies of TatA, TatB and TatC subunits, and a separate TatA complex, containing only TatA subunits. Substrates initially bind to the TatABC complex, which probably triggers association of the separate TatA complex to form the active translocon.

Its subcellular location is the cell inner membrane. Part of the twin-arginine translocation (Tat) system that transports large folded proteins containing a characteristic twin-arginine motif in their signal peptide across membranes. TatA could form the protein-conducting channel of the Tat system. The polypeptide is Sec-independent protein translocase protein TatA (Stutzerimonas stutzeri (Pseudomonas stutzeri)).